A 310-amino-acid polypeptide reads, in one-letter code: Homoserine kinase (310 aa).

Residue 91-101 (PIGSGLGSSAC) participates in ATP binding.

Belongs to the GHMP kinase family. Homoserine kinase subfamily.

Its subcellular location is the cytoplasm. It catalyses the reaction L-homoserine + ATP = O-phospho-L-homoserine + ADP + H(+). Its pathway is amino-acid biosynthesis; L-threonine biosynthesis; L-threonine from L-aspartate: step 4/5. Catalyzes the ATP-dependent phosphorylation of L-homoserine to L-homoserine phosphate. In Escherichia coli O81 (strain ED1a), this protein is Homoserine kinase.